The primary structure comprises 163 residues: Myosin light chain 2 (163 aa).

EF-hand domains are found at residues 15 to 50 (DYIN…LGKT) and 92 to 127 (PERE…AGFE). Positions 28, 30, 32, and 39 each coordinate Ca(2+).

Interacts with the IQ domain of MYO1.

Its subcellular location is the bud neck. Functionally, regulatory light chain for the class II conventional myosin MYO1. May play a role in the disassembly of the MYO1 ring at the bud neck at the end of its contraction during cytokinesis. This is Myosin light chain 2 (MLC2) from Saccharomyces cerevisiae (strain ATCC 204508 / S288c) (Baker's yeast).